We begin with the raw amino-acid sequence, 448 residues long: Asparagine--tRNA ligase (448 aa).

This sequence belongs to the class-II aminoacyl-tRNA synthetase family. In terms of assembly, homodimer.

The protein resides in the cytoplasm. The catalysed reaction is tRNA(Asn) + L-asparagine + ATP = L-asparaginyl-tRNA(Asn) + AMP + diphosphate + H(+). This Streptococcus thermophilus (strain CNRZ 1066) protein is Asparagine--tRNA ligase.